We begin with the raw amino-acid sequence, 234 residues long: Accessory gland protein Acp29AB (234 aa).

A signal peptide spans 1-21 (MYATNLLYLLALWNLWLVSGG). Asparagine 29, asparagine 61, asparagine 127, and asparagine 164 each carry an N-linked (GlcNAc...) asparagine glycan. The region spanning 137-234 (VTCREMNGHL…SFVCQANQWA (98 aa)) is the C-type lectin domain. 2 disulfides stabilise this stretch: cysteine 139/cysteine 228 and cysteine 207/cysteine 220.

The protein resides in the secreted. Responsible for physiological and behavioral changes in mated female flies. This Drosophila simulans (Fruit fly) protein is Accessory gland protein Acp29AB (Acp29AB).